A 446-amino-acid chain; its full sequence is MGEGAAGSWYVTRDEVERGSPSRRDGVGAAKEAELRATYCSFIRDVGLRLQLPQVTIATATLLCHRFYLRQSHAKNEWQTVATVCVFLASKIEDTPCPLQRVIIVAYETMYRKDCNAAHRIYQKEVLEKQKELILVGETLLLSTIRFDFNIQHPYEPLKLALKKLGIFQMEVKQVAVNLINDAIRTTLVVQFKPHYIAAGSLYLAAKFNNFRLPSDGKVWWHEFDVAPKQLQAVIQQMTELFMGRNPCSMGPAIRPPPTPSLMERQQVIRPPPTPTLMERQPIIRPLPTPTLMENQHITHSLGAVMRHTHSSIRSLSNNFDREASRSLPLNIPANRKSTVCPARNEGNQSLRMHMGHSNGSDARFEKQYSRGALKADHVYHVVSGQKDLHVTGIRDLVRQKRTFHEVGEHPAPIDKSDTKSWIRKRHGRNVIVFDTKSSSWKKQKL.

Belongs to the cyclin family. Cyclin T subfamily.

The protein is Cyclin-T1-1 (CYCT1-1) of Oryza sativa subsp. japonica (Rice).